The following is a 444-amino-acid chain: Trigger factor (444 aa).

One can recognise a PPIase FKBP-type domain in the interval 160–245; that stretch reads DMQVTFDFEG…VKQVEKPKLP (86 aa).

It belongs to the FKBP-type PPIase family. Tig subfamily.

It localises to the cytoplasm. It carries out the reaction [protein]-peptidylproline (omega=180) = [protein]-peptidylproline (omega=0). Functionally, involved in protein export. Acts as a chaperone by maintaining the newly synthesized protein in an open conformation. Functions as a peptidyl-prolyl cis-trans isomerase. In Acinetobacter baylyi (strain ATCC 33305 / BD413 / ADP1), this protein is Trigger factor.